The chain runs to 467 residues: ATP synthase subunit beta (467 aa).

Residue 154–161 (GGAGVGKT) participates in ATP binding.

The protein belongs to the ATPase alpha/beta chains family. As to quaternary structure, F-type ATPases have 2 components, CF(1) - the catalytic core - and CF(0) - the membrane proton channel. CF(1) has five subunits: alpha(3), beta(3), gamma(1), delta(1), epsilon(1). CF(0) has three main subunits: a(1), b(2) and c(9-12). The alpha and beta chains form an alternating ring which encloses part of the gamma chain. CF(1) is attached to CF(0) by a central stalk formed by the gamma and epsilon chains, while a peripheral stalk is formed by the delta and b chains.

Its subcellular location is the cell inner membrane. It carries out the reaction ATP + H2O + 4 H(+)(in) = ADP + phosphate + 5 H(+)(out). In terms of biological role, produces ATP from ADP in the presence of a proton gradient across the membrane. The catalytic sites are hosted primarily by the beta subunits. The sequence is that of ATP synthase subunit beta from Leptospira borgpetersenii serovar Hardjo-bovis (strain JB197).